A 370-amino-acid polypeptide reads, in one-letter code: 3,5-dihydroxyphenylacetyl-CoA synthase (370 aa).

The active site involves Cys-158.

Belongs to the thiolase-like superfamily. Chalcone/stilbene synthases family.

It catalyses the reaction 4 malonyl-CoA + 4 H(+) = (3,5-dihydroxyphenyl)acetyl-CoA + 4 CO2 + 3 CoA + H2O. Its pathway is antibiotic biosynthesis; vancomycin biosynthesis. In terms of biological role, involved in the biosynthesis of the nonproteinogenic amino acid monomer (S)-3,5-dihydroxyphenylglycine (Dpg) responsible of the production of vancomycin and teicoplanin antibiotics. Catalyzes the Claisen condensation of four molecules of malonyl-CoA to yield 3,5-dihydroxyphenylacetyl-CoA (DPA-CoA) and three free coenzyme A (CoA). DpgA requires the presence of the dehydratases DpgB and DpgD to facilitate the aromatization of the DPA-S-DgpA or DPA-S-CoA intermediate. This Amycolatopsis orientalis (Nocardia orientalis) protein is 3,5-dihydroxyphenylacetyl-CoA synthase (dpgA).